A 184-amino-acid chain; its full sequence is Protein PLANT CADMIUM RESISTANCE 4 (184 aa).

Positions 1–10 are enriched in polar residues; sequence MGRPGSQPNE. The disordered stretch occupies residues 1-21; it reads MGRPGSQPNEAQPPPVQVQPT. A helical transmembrane segment spans residues 96-116; it reads GGLLYGMIFFIGVPFVYSCMF.

This sequence belongs to the cornifelin family.

The protein resides in the membrane. In terms of biological role, may be involved in heavy metals transport. The protein is Protein PLANT CADMIUM RESISTANCE 4 (PCR4) of Arabidopsis thaliana (Mouse-ear cress).